The sequence spans 361 residues: Queuine tRNA-ribosyltransferase (361 aa).

The active-site Proton acceptor is D92. Substrate-binding positions include 92 to 96 (DSGGF), D146, Q189, and G216. The interval 247-253 (GVGKPAD) is RNA binding. The Nucleophile role is filled by D266. The tract at residues 271–275 (TRSGR) is RNA binding; important for wobble base 34 recognition. Zn(2+)-binding residues include C304, C306, C309, and H335.

This sequence belongs to the queuine tRNA-ribosyltransferase family. As to quaternary structure, homodimer. Within each dimer, one monomer is responsible for RNA recognition and catalysis, while the other monomer binds to the replacement base PreQ1. Zn(2+) is required as a cofactor.

It carries out the reaction 7-aminomethyl-7-carbaguanine + guanosine(34) in tRNA = 7-aminomethyl-7-carbaguanosine(34) in tRNA + guanine. Its pathway is tRNA modification; tRNA-queuosine biosynthesis. Its function is as follows. Catalyzes the base-exchange of a guanine (G) residue with the queuine precursor 7-aminomethyl-7-deazaguanine (PreQ1) at position 34 (anticodon wobble position) in tRNAs with GU(N) anticodons (tRNA-Asp, -Asn, -His and -Tyr). Catalysis occurs through a double-displacement mechanism. The nucleophile active site attacks the C1' of nucleotide 34 to detach the guanine base from the RNA, forming a covalent enzyme-RNA intermediate. The proton acceptor active site deprotonates the incoming PreQ1, allowing a nucleophilic attack on the C1' of the ribose to form the product. After dissociation, two additional enzymatic reactions on the tRNA convert PreQ1 to queuine (Q), resulting in the hypermodified nucleoside queuosine (7-(((4,5-cis-dihydroxy-2-cyclopenten-1-yl)amino)methyl)-7-deazaguanosine). This chain is Queuine tRNA-ribosyltransferase, found in Rickettsia bellii (strain OSU 85-389).